Here is a 101-residue protein sequence, read N- to C-terminus: ATP synthase subunit c (101 aa).

2 helical membrane-spanning segments follow: residues 28–48 and 72–92; these read SVVAAGVGLGLAALGGAVGMG and MFIALAMIEAQVIYTLVIALI.

This sequence belongs to the ATPase C chain family. In terms of assembly, F-type ATPases have 2 components, F(1) - the catalytic core - and F(0) - the membrane proton channel. F(1) has five subunits: alpha(3), beta(3), gamma(1), delta(1), epsilon(1). F(0) has three main subunits: a(1), b(2) and c(10-14). The alpha and beta chains form an alternating ring which encloses part of the gamma chain. F(1) is attached to F(0) by a central stalk formed by the gamma and epsilon chains, while a peripheral stalk is formed by the delta and b chains.

It localises to the cell inner membrane. Its function is as follows. F(1)F(0) ATP synthase produces ATP from ADP in the presence of a proton or sodium gradient. F-type ATPases consist of two structural domains, F(1) containing the extramembraneous catalytic core and F(0) containing the membrane proton channel, linked together by a central stalk and a peripheral stalk. During catalysis, ATP synthesis in the catalytic domain of F(1) is coupled via a rotary mechanism of the central stalk subunits to proton translocation. Functionally, key component of the F(0) channel; it plays a direct role in translocation across the membrane. A homomeric c-ring of between 10-14 subunits forms the central stalk rotor element with the F(1) delta and epsilon subunits. This is ATP synthase subunit c from Sulfurovum sp. (strain NBC37-1).